Reading from the N-terminus, the 385-residue chain is 8-amino-7-oxononanoate synthase (385 aa).

Arg21 lines the substrate pocket. 108 to 109 is a binding site for pyridoxal 5'-phosphate; the sequence is GF. Residue His133 coordinates substrate. Pyridoxal 5'-phosphate is bound by residues Ser179, His207, and Thr233. Lys236 carries the post-translational modification N6-(pyridoxal phosphate)lysine. Thr352 contacts substrate.

Belongs to the class-II pyridoxal-phosphate-dependent aminotransferase family. BioF subfamily. As to quaternary structure, homodimer. Pyridoxal 5'-phosphate is required as a cofactor.

The catalysed reaction is 6-carboxyhexanoyl-[ACP] + L-alanine + H(+) = (8S)-8-amino-7-oxononanoate + holo-[ACP] + CO2. Its pathway is cofactor biosynthesis; biotin biosynthesis. Catalyzes the decarboxylative condensation of pimeloyl-[acyl-carrier protein] and L-alanine to produce 8-amino-7-oxononanoate (AON), [acyl-carrier protein], and carbon dioxide. The protein is 8-amino-7-oxononanoate synthase of Salmonella arizonae (strain ATCC BAA-731 / CDC346-86 / RSK2980).